A 555-amino-acid polypeptide reads, in one-letter code: 5'-nucleotidase-related protein (555 aa).

An N-terminal signal peptide occupies residues 1–25; that stretch reads MKSLIGTLGLYCLFILTNNVVSSYG. A divalent metal cation is bound by residues D38, H40, and D91. The N-linked (GlcNAc...) asparagine glycan is linked to N105. N123 is a binding site for a divalent metal cation. N-linked (GlcNAc...) asparagine glycosylation occurs at N198. A divalent metal cation is bound by residues H225 and H249. N295 is a glycosylation site (N-linked (GlcNAc...) asparagine). AMP is bound by residues R358, R402, and F421. N465 is a glycosylation site (N-linked (GlcNAc...) asparagine). AMP-binding residues include F505 and D511.

It belongs to the 5'-nucleotidase family. Mg(2+) serves as cofactor. The cofactor is Mn(2+). Salivary gland (at protein level). Saliva (at protein level).

Its subcellular location is the secreted. It catalyses the reaction a ribonucleoside 5'-triphosphate + 2 H2O = a ribonucleoside 5'-phosphate + 2 phosphate + 2 H(+). Its activity is regulated as follows. DEPC (2 mM), sodium fluoride (10 mM) and 4,4'-Diisothiocyano-2,2'-stilbenedisulfonic acid (DIDS, 100 uM) nearly completely abrogate activity. Concanavalin A enhances activity. Facilitates hematophagy by inhibiting ADP-dependent platelet aggregation and promoting disaggregation of ADP-stimulated platelets in the host. Cleaves adenosine triphosphate (ATP) and adenosine diphosphate (ADP) to adenosine monophosphate (AMP) and inorganic phosphate. Interacts with fibrinogen receptor integrin alpha-IIb/beta-3 (ITGA2B/ITGB3). This Glossina morsitans morsitans (Savannah tsetse fly) protein is 5'-nucleotidase-related protein.